Here is a 2079-residue protein sequence, read N- to C-terminus: Non-reducing polyketide synthase Dhc5 (2079 aa).

The N-terminal acylcarrier protein transacylase domain (SAT) stretch occupies residues Leu-9–His-246. Residues Asn-366–Asp-798 form the Ketosynthase family 3 (KS3) domain. Active-site for beta-ketoacyl synthase activity residues include Cys-543, His-678, and His-717. The tract at residues Val-895–Ser-1199 is malonyl-CoA:ACP transacylase (MAT) domain. Residue Ser-986 is the For acyl/malonyl transferase activity of the active site. The N-terminal hotdog fold stretch occupies residues Glu-1268–Asp-1414. Residues Glu-1268–Lys-1584 enclose the PKS/mFAS DH domain. Residues Met-1304 to Ala-1581 form a product template (PT) domain region. The C-terminal hotdog fold stretch occupies residues Arg-1435–Lys-1584. The interval Arg-1613 to Glu-1639 is disordered. A compositionally biased stretch (polar residues) spans Leu-1615 to Thr-1628. The region spanning Ala-1641–Glu-1718 is the Carrier domain. Position 1678 is an O-(pantetheine 4'-phosphoryl)serine (Ser-1678). Positions Val-1721–Asp-1784 are disordered. Residues Ser-1727 to Pro-1757 are compositionally biased toward low complexity. The segment covering Ser-1758–Asp-1784 has biased composition (basic and acidic residues). Residues Ala-1812–Leu-2057 form a thioesterase (TE) domain region. The active-site For thioesterase activity is the His-2064.

It participates in mycotoxin biosynthesis. Highly reducing polyketide synthase; part of the gene cluster that mediates the biosynthesis of 10,11-dehydrocurvularin, a prevalent fungal phytotoxin with heat shock response and immune-modulatory activities. The highly reducing polyketide synthase Dhc3 is responsible for biosynthesis up to the tetraketide stage. The non-reducing polyketide synthase Dhc5 then conducts four additional chain extension cycles, producing the unreduced part of the nascent octaketide from C-1 to C-8 in 10,11-dehydrocurvularin. The protein is Non-reducing polyketide synthase Dhc5 of Alternaria cinerariae.